A 241-amino-acid polypeptide reads, in one-letter code: Probable transcriptional regulatory protein SAR11_0592 (241 aa).

The disordered stretch occupies residues 1–24 (MSGHSKWASIKHSKGKADKQRSKV).

This sequence belongs to the TACO1 family.

The protein resides in the cytoplasm. The chain is Probable transcriptional regulatory protein SAR11_0592 from Pelagibacter ubique (strain HTCC1062).